We begin with the raw amino-acid sequence, 174 residues long: 3-hydroxydecanoyl-[acyl-carrier-protein] dehydratase (174 aa).

Residue His-73 is part of the active site.

This sequence belongs to the thioester dehydratase family. FabA subfamily. Homodimer.

The protein localises to the cytoplasm. It carries out the reaction a (3R)-hydroxyacyl-[ACP] = a (2E)-enoyl-[ACP] + H2O. The enzyme catalyses (3R)-hydroxydecanoyl-[ACP] = (2E)-decenoyl-[ACP] + H2O. It catalyses the reaction (2E)-decenoyl-[ACP] = (3Z)-decenoyl-[ACP]. Its pathway is lipid metabolism; fatty acid biosynthesis. Functionally, necessary for the introduction of cis unsaturation into fatty acids. Catalyzes the dehydration of (3R)-3-hydroxydecanoyl-ACP to E-(2)-decenoyl-ACP and then its isomerization to Z-(3)-decenoyl-ACP. Can catalyze the dehydratase reaction for beta-hydroxyacyl-ACPs with saturated chain lengths up to 16:0, being most active on intermediate chain length. This Cellvibrio japonicus (strain Ueda107) (Pseudomonas fluorescens subsp. cellulosa) protein is 3-hydroxydecanoyl-[acyl-carrier-protein] dehydratase.